The primary structure comprises 718 residues: MESLPARLFPGLSIKIQRSNGLIHSANISTVNVEKSCVSVEWIEGGNTKGKEIDFDDVAAINPELLQLLPLHPKDNLPLQENVTVPKQKRRSVNSKIPAPKEGLRSRSTRMSTVPEVRIATQENEMEVELPVATNSRKQFSVATGLPRPSCPAMTELPLSMVSEEAEEQVHPTRSTSSANPARRKSCIVKEMEKMKNKREEKRAQNSEIRIKRAQEYDSSFPNWEFARMIKEFRVTIECHPLTLTDPTEEHRICVCVRKRPLNKQELAKKEIDVISVPSKCLLFVHEPKLKVDLTKYLENQAFCFDFAFDETASNEVVYRFTARPLVQTIFEGGKATCFAYGQTGSGKTHTMGGDLSGKSQNTSKGIYAMASRDVFLLKSQPRYRNLNLEVYVTFFEIYNGKVFDLLNKKAKLRVLEDSKQQVQVVGLQEYLVNCADDVIKMLNMGSACRTSGQTFANSNSSRSHACFQILLRAKGRLHGKFSLVDLAGNERGADTSSADRQTRMEGAEINKSLLALKECIRALGQNKAHTPFRESKLTQVLRDSFIGENSRTCMIAMISPGISSCEYTLNTLRYADRVKELSPHSGLSGEQPIQMETEEMEASSNGTSLAVNFKEEEELSSQMSSFNEAMSQIRELEERAMEELREIIQQGPGWLELSEMTDQPDYDLETFVNKAESALTQQTKHFSALREVIKALRVAMQLEEQASKQMNSKKRHQ.

Positions 1–248 (MESLPARLFP…CHPLTLTDPT (248 aa)) are globular. Phosphoserine is present on residues S3 and S19. The disordered stretch occupies residues 86–111 (PKQKRRSVNSKIPAPKEGLRSRSTRM). Phosphoserine; by AURKB is present on S92. A Microtubule tip localization signal motif is present at residues 95–98 (SKIP). A phosphoserine mark is found at S106, S108, S112, S163, and S186. The tract at residues 201 to 232 (EKRAQNSEIRIKRAQEYDSSFPNWEFARMIKE) is negative regulator of microtubule-binding. The region spanning 252 to 582 (RICVCVRKRP…LRYADRVKEL (331 aa)) is the Kinesin motor domain. ATP-binding positions include R258 and 342–349 (GQTGSGKT). The Nuclear localization signal signature appears at 409–412 (KKAK). S513 and S626 each carry phosphoserine. Coiled coils occupy residues 613 to 651 (NFKEEEELSSQMSSFNEAMSQIRELEERAMEELREIIQQ) and 689 to 716 (ALREVIKALRVAMQLEEQASKQMNSKKR).

This sequence belongs to the TRAFAC class myosin-kinesin ATPase superfamily. Kinesin family. MCAK/KIF2 subfamily. In terms of assembly, interacts with CENPH. Interacts with MTUS2/TIP150; the interaction is direct. Interacts with MAPRE1; the interaction is direct, regulated by phosphorylation and is probably required for targeting to growing microtubule plus ends. Interacts with KIF18B at microtubule tips; this interaction increases the affinity of both partners for microtubule plus ends and is required for robust microtubule depolymerization. Phosphorylation by AURKA or AURKB strongly reduces KIF18B-binding. Phosphorylation by AURKB, regulates association with centromeres and kinetochores and the microtubule depolymerization activity. In terms of processing, ubiquitinated.

The protein localises to the cytoplasm. It localises to the cytoskeleton. It is found in the nucleus. The protein resides in the chromosome. Its subcellular location is the centromere. The protein localises to the kinetochore. In complex with KIF18B, constitutes the major microtubule plus-end depolymerizing activity in mitotic cells. Regulates the turnover of microtubules at the kinetochore and functions in chromosome segregation during mitosis. Plays a role in chromosome congression and is required for the lateral to end-on conversion of the chromosome-microtubule attachment. This Cricetulus griseus (Chinese hamster) protein is Kinesin-like protein KIF2C (KIF2C).